The chain runs to 231 residues: Somatolactin (231 aa).

The N-terminal stretch at 1–24 is a signal peptide; it reads MNMMTVKQQGVWAALLWPYLLTAS. 3 disulfides stabilise this stretch: cysteine 29–cysteine 39, cysteine 89–cysteine 205, and cysteine 222–cysteine 230. Asparagine 145 carries an N-linked (GlcNAc...) asparagine glycan.

Belongs to the somatotropin/prolactin family. In terms of tissue distribution, pituitary gland.

It localises to the secreted. The protein is Somatolactin of Paralichthys olivaceus (Bastard halibut).